The primary structure comprises 128 residues: Lysozyme C-1 (128 aa).

Residues 1–128 (KVYDRCEFAR…VSQYIRGCKL (128 aa)) form the C-type lysozyme domain. Cystine bridges form between cysteine 6-cysteine 126, cysteine 30-cysteine 114, cysteine 63-cysteine 79, and cysteine 75-cysteine 93. Catalysis depends on residues glutamate 35 and aspartate 51.

Belongs to the glycosyl hydrolase 22 family. As to quaternary structure, monomer.

It localises to the secreted. The enzyme catalyses Hydrolysis of (1-&gt;4)-beta-linkages between N-acetylmuramic acid and N-acetyl-D-glucosamine residues in a peptidoglycan and between N-acetyl-D-glucosamine residues in chitodextrins.. Functionally, lysozymes have primarily a bacteriolytic function; those in tissues and body fluids are associated with the monocyte-macrophage system and enhance the activity of immunoagents. This chain is Lysozyme C-1, found in Sus scrofa (Pig).